A 117-amino-acid chain; its full sequence is Small ribosomal subunit protein uS12c (117 aa).

Residues 9–40 (RNARQPIENRKKSPALRGCPQRRGTITPKKPN) are disordered.

Belongs to the universal ribosomal protein uS12 family. As to quaternary structure, part of the 30S ribosomal subunit.

It is found in the plastid. The protein localises to the chloroplast. Its function is as follows. With S4 and S5 plays an important role in translational accuracy. Located at the interface of the 30S and 50S subunits. The chain is Small ribosomal subunit protein uS12c (rps12) from Pinus koraiensis (Korean pine).